The sequence spans 535 residues: CTP synthase (535 aa).

Residues Met1 to Leu267 are amidoligase domain. Ser13 is a binding site for CTP. Ser13 contributes to the UTP binding site. Ser14–Ile19 contacts ATP. Residue Tyr54 participates in L-glutamine binding. Asp71 contributes to the ATP binding site. Mg(2+) is bound by residues Asp71 and Glu141. CTP is bound by residues Asp148 to Glu150, Lys188 to Gln193, and Lys224. UTP is bound by residues Lys188–Gln193 and Lys224. Arg240–Ala242 contacts ATP. One can recognise a Glutamine amidotransferase type-1 domain in the interval Thr293–Lys535. Gly355 contacts L-glutamine. Catalysis depends on Cys382, which acts as the Nucleophile; for glutamine hydrolysis. Residues Leu383–Gln386, Glu406, and Arg463 contribute to the L-glutamine site. Active-site residues include His508 and Glu510.

It belongs to the CTP synthase family. As to quaternary structure, homotetramer.

The enzyme catalyses UTP + L-glutamine + ATP + H2O = CTP + L-glutamate + ADP + phosphate + 2 H(+). It catalyses the reaction L-glutamine + H2O = L-glutamate + NH4(+). It carries out the reaction UTP + NH4(+) + ATP = CTP + ADP + phosphate + 2 H(+). Its pathway is pyrimidine metabolism; CTP biosynthesis via de novo pathway; CTP from UDP: step 2/2. With respect to regulation, allosterically activated by GTP, when glutamine is the substrate; GTP has no effect on the reaction when ammonia is the substrate. The allosteric effector GTP functions by stabilizing the protein conformation that binds the tetrahedral intermediate(s) formed during glutamine hydrolysis. Inhibited by the product CTP, via allosteric rather than competitive inhibition. Its function is as follows. Catalyzes the ATP-dependent amination of UTP to CTP with either L-glutamine or ammonia as the source of nitrogen. Regulates intracellular CTP levels through interactions with the four ribonucleotide triphosphates. This is CTP synthase from Staphylococcus haemolyticus (strain JCSC1435).